Consider the following 99-residue polypeptide: Signal recognition particle 19 kDa protein (99 aa).

This sequence belongs to the SRP19 family. As to quaternary structure, part of the signal recognition particle protein translocation system, which is composed of SRP and FtsY. Archaeal SRP consists of a 7S RNA molecule of 300 nucleotides and two protein subunits: SRP54 and SRP19.

Its subcellular location is the cytoplasm. Involved in targeting and insertion of nascent membrane proteins into the cytoplasmic membrane. Binds directly to 7S RNA and mediates binding of the 54 kDa subunit of the SRP. The chain is Signal recognition particle 19 kDa protein from Ignicoccus hospitalis (strain KIN4/I / DSM 18386 / JCM 14125).